The following is a 74-amino-acid chain: Conotoxin VnMEKL-0222 (74 aa).

The first 19 residues, 1 to 19 (MEKLTILLLVAAVLMSTQA), serve as a signal peptide directing secretion. A propeptide spanning residues 20–46 (LIQEKRPKEKIKFLSKRKSIPESWWEG) is cleaved from the precursor. 3 disulfide bridges follow: cysteine 48–cysteine 62, cysteine 55–cysteine 66, and cysteine 61–cysteine 71.

The protein belongs to the conotoxin O2 superfamily. As to expression, expressed by the venom duct.

Its subcellular location is the secreted. This is Conotoxin VnMEKL-0222 from Conus ventricosus (Mediterranean cone).